Here is a 342-residue protein sequence, read N- to C-terminus: Delta(6)-protoilludene synthase 8 (342 aa).

A Mg(2+)-binding site is contributed by D81. The DDXXD motif motif lies at 93 to 97 (RDMVD). Mg(2+) is bound by residues N217, S221, and E225. Residues 217 to 225 (NDLVSYNRE) carry the NSE/DTE motif motif. 2 residues coordinate (2E,6E)-farnesyl diphosphate: R305 and Y306.

The protein belongs to the terpene synthase family. Requires Mg(2+) as cofactor.

It catalyses the reaction (2E,6E)-farnesyl diphosphate = Delta(6)-protoilludene + diphosphate. In terms of biological role, terpene cyclase that catalyzes the cyclization of farnesyl diphosphate (FPP) to delta(6)-protoilludene. This chain is Delta(6)-protoilludene synthase 8, found in Postia placenta (strain ATCC 44394 / Madison 698-R) (Brown rot fungus).